Reading from the N-terminus, the 354-residue chain is MKPSPQFLLAAFLSLILQTGICYGIKWIALSKTPSALALNQTQHCKQLEGLVVSQVQLCRSNLELMQTIIQAAREVIKTCRKTFSDMRWNCSSIELAPNYLLDLERGTRESAFVYALSAAAISHTIARACTTGDLPGCSCGPIPGETPGPGYRWGGCADNLNYGLIMGSKFSDAPMKMKKSGSQANKLMHLHNSEVGRQVLKASLEMKCKCHGVSGSCSIKTCWKGLQELRDIALDLKNKYLSATKVVHRPMGTRKYLVPKDIDIRPVKETELIYLQSSPDFCMKNEKVGSHGTQDRQCNKTSNGSDSCDLMCCGRGYNPYMDKVVERCHCKYHWCCYVTCKKCERTVERYVCK.

Residues 1–24 (MKPSPQFLLAAFLSLILQTGICYG) form the signal peptide. N-linked (GlcNAc...) asparagine glycans are attached at residues Asn-40 and Asn-90. 11 disulfide bridges follow: Cys-80–Cys-91, Cys-130–Cys-138, Cys-140–Cys-157, Cys-209–Cys-223, Cys-211–Cys-218, Cys-283–Cys-314, Cys-299–Cys-309, Cys-313–Cys-353, Cys-329–Cys-344, Cys-331–Cys-341, and Cys-336–Cys-337. A lipid anchor (O-palmitoleoyl serine; by PORCN) is attached at Ser-215. N-linked (GlcNAc...) asparagine glycans are attached at residues Asn-300 and Asn-304.

Belongs to the Wnt family. Palmitoleoylation is required for efficient binding to frizzled receptors. Depalmitoleoylation leads to Wnt signaling pathway inhibition.

It localises to the secreted. It is found in the extracellular space. Its subcellular location is the extracellular matrix. Functionally, ligand for members of the frizzled family of seven transmembrane receptors. May play a role in the formation of dermal structure, both limb and feather buds. Is likely to signal over only few cell diameters. The protein is Protein Wnt-11 (WNT11) of Coturnix japonica (Japanese quail).